The chain runs to 208 residues: Transmembrane protein 160 (208 aa).

A mitochondrion-targeting transit peptide spans 1 to 45; that stretch reads MASIRWLMGSRLSRFVCPFAQLVRQPVLRYVRPPVRALHRGSVRR. 3 helical membrane passes run 82-102, 110-130, and 147-167; these read GFLSWFRNGLLATGIGVIAFV, AGYAFFILGGMCVSFGGASYV, and VLLHTAVVSSAALFWLCAVSL. A compositionally biased stretch (acidic residues) spans 181-192; the sequence is DDEEHGADESSE. The tract at residues 181 to 208 is disordered; that stretch reads DDEEHGADESSECAECRARRDREKGQDK. A compositionally biased stretch (basic and acidic residues) spans 194-208; that stretch reads AECRARRDREKGQDK.

Belongs to the TMEM160 family.

The protein resides in the mitochondrion inner membrane. This Danio rerio (Zebrafish) protein is Transmembrane protein 160.